Here is a 64-residue protein sequence, read N- to C-terminus: DNA gyrase inhibitor YacG (64 aa).

Residues cysteine 9, cysteine 12, cysteine 28, and cysteine 32 each contribute to the Zn(2+) site. The tract at residues 42–64 (DEENAIPGAPDMSDSDGWSEEQY) is disordered. Positions 54–64 (SDSDGWSEEQY) are enriched in acidic residues.

This sequence belongs to the DNA gyrase inhibitor YacG family. As to quaternary structure, interacts with GyrB. It depends on Zn(2+) as a cofactor.

Inhibits all the catalytic activities of DNA gyrase by preventing its interaction with DNA. Acts by binding directly to the C-terminal domain of GyrB, which probably disrupts DNA binding by the gyrase. This Vibrio vulnificus (strain YJ016) protein is DNA gyrase inhibitor YacG.